A 90-amino-acid polypeptide reads, in one-letter code: Large ribosomal subunit protein bL27 (90 aa).

Positions 1-21 (MAHKKAGGSSRNGRDSHGKRL) are disordered.

This sequence belongs to the bacterial ribosomal protein bL27 family.

This Nitrobacter winogradskyi (strain ATCC 25391 / DSM 10237 / CIP 104748 / NCIMB 11846 / Nb-255) protein is Large ribosomal subunit protein bL27.